A 283-amino-acid polypeptide reads, in one-letter code: Putative S-adenosyl-L-methionine-dependent methyltransferase SAV_474/SAV474 (283 aa).

S-adenosyl-L-methionine is bound by residues D121 and 150–151 (DL). Residues 258 to 283 (AAYGRPISTPPQREERPGGLISAVRR) form a disordered region.

It belongs to the UPF0677 family.

Its function is as follows. Exhibits S-adenosyl-L-methionine-dependent methyltransferase activity. The protein is Putative S-adenosyl-L-methionine-dependent methyltransferase SAV_474/SAV474 of Streptomyces avermitilis (strain ATCC 31267 / DSM 46492 / JCM 5070 / NBRC 14893 / NCIMB 12804 / NRRL 8165 / MA-4680).